Here is a 689-residue protein sequence, read N- to C-terminus: MTTQNFLAEIGTEELPPKALKKLATAFAENVENELNQAGLTFEKVQWFAAPRRLAVKVLNLATSQPTKEIEKRGPAVSAAFDAEGKPTKAAEGWARGCGITVEQAERLATDKGEWLVHRATIEGQPTKNLMLDIVTRSLANLPIPKMMRWGDKTEQFVRPVHTVSLLLGGELIEGEILGIASGRTIRGHRFLGEAEFQIAHADEYPQILKDKGSVIADFNERRAIILADSQAKASALGGVADIEDDLLDEVTSLVEFPNVLTATFEERFLAVPAEALVYTMKGDQKYFPIYDKNGKLLPHFIFVSNINPTDPTPIIEGNEKVVRPRLSDAEFFFNTDKKQRLEDLLPRLETVLFQQQLGTLLDKTKRIQALAGEIATQIGADKAKAERAGLLSKCDLMTNMVFEFTDTQGVMGMHYARHDGEDEEVAVALNEQYMPRFAGDNLPNSLVASSVALADKFDTLTGIFGIGQAPKGSADPFALRRAALGALRIIVEKNLPLDLAEIVKKSTALFADRLTNQNVVDDVVDFMLGRFRAWYQDEGIAVDVIQAVLARRPTKPADFDARVRAVSHFRTLDSAEALAAANKRVSNILAKIEGEISSKIDRTLLLEPEEKALAEQVLALQSELAPLFAKGEYQPALDRLAGLREVIDNFFDKVMVNAEDEKLRQNRQAILNTLRNLFLQVADISLLQ.

The protein belongs to the class-II aminoacyl-tRNA synthetase family. Tetramer of two alpha and two beta subunits.

The protein resides in the cytoplasm. It carries out the reaction tRNA(Gly) + glycine + ATP = glycyl-tRNA(Gly) + AMP + diphosphate. The polypeptide is Glycine--tRNA ligase beta subunit (Mannheimia succiniciproducens (strain KCTC 0769BP / MBEL55E)).